The following is a 354-amino-acid chain: UDP-N-acetylglucosamine--N-acetylmuramyl-(pentapeptide) pyrophosphoryl-undecaprenol N-acetylglucosamine transferase (354 aa).

Residues 11 to 13 (TGG), Asn-117, Arg-160, Ser-186, and Gln-288 contribute to the UDP-N-acetyl-alpha-D-glucosamine site.

This sequence belongs to the glycosyltransferase 28 family. MurG subfamily.

The protein localises to the cell inner membrane. The enzyme catalyses di-trans,octa-cis-undecaprenyl diphospho-N-acetyl-alpha-D-muramoyl-L-alanyl-D-glutamyl-meso-2,6-diaminopimeloyl-D-alanyl-D-alanine + UDP-N-acetyl-alpha-D-glucosamine = di-trans,octa-cis-undecaprenyl diphospho-[N-acetyl-alpha-D-glucosaminyl-(1-&gt;4)]-N-acetyl-alpha-D-muramoyl-L-alanyl-D-glutamyl-meso-2,6-diaminopimeloyl-D-alanyl-D-alanine + UDP + H(+). Its pathway is cell wall biogenesis; peptidoglycan biosynthesis. Its function is as follows. Cell wall formation. Catalyzes the transfer of a GlcNAc subunit on undecaprenyl-pyrophosphoryl-MurNAc-pentapeptide (lipid intermediate I) to form undecaprenyl-pyrophosphoryl-MurNAc-(pentapeptide)GlcNAc (lipid intermediate II). The sequence is that of UDP-N-acetylglucosamine--N-acetylmuramyl-(pentapeptide) pyrophosphoryl-undecaprenol N-acetylglucosamine transferase from Rickettsia canadensis (strain McKiel).